Consider the following 798-residue polypeptide: Integrin beta-1-B (798 aa).

The first 21 residues, 1–21 (MARYPVFTFVFLICLVLCTNA), serve as a signal peptide directing secretion. The Extracellular portion of the chain corresponds to 22–727 (QQGGTECLKA…VKEPECPSGP (706 aa)). Residues 27-77 (ECLKANAKSCGECIQAGPNCGWCTKVDFLQEGEPTSARCDDLAALKTKGCP) form the PSI domain. Disulfide bonds link C28–C46, C36–C464, C39–C65, C49–C76, C206–C212, C260–C300, C400–C414, C434–C462, C466–C486, C477–C489, C491–C500, C502–C533, C516–C531, C525–C536, C538–C553, C555–C576, C560–C574, C568–C579, C581–C590, C592–C615, C599–C613, C607–C618, C620–C630, C633–C636, C640–C691, C646–C665, C649–C661, and C699–C723. The disordered stretch occupies residues 77–106 (PEDDIQNPRGRKQKLKDIPITSKGKGERMD). 2 N-linked (GlcNAc...) asparagine glycosylation sites follow: N109 and N131. In terms of domain architecture, VWFA spans 139-377 (DYPIDLYYLM…QLIIDSYNSL (239 aa)). The Mg(2+) site is built by S151 and S153. Positions 153, 156, 157, and 188 each coordinate Ca(2+). 2 N-linked (GlcNAc...) asparagine glycosylation sites follow: N211 and N223. Ca(2+) contacts are provided by N243, D245, P247, and E248. E248 lines the Mg(2+) pocket. N-linked (GlcNAc...) asparagine glycosylation is found at N268 and N362. N416 is a glycosylation site (N-linked (GlcNAc...) asparagine). I-EGF domains follow at residues 466–501 (CQDK…KECE), 502–554 (CSTD…KYCE), 555–591 (CDNF…SACD), and 592–631 (CSED…PTCE). A glycan (N-linked (GlcNAc...) asparagine) is linked at N481. The N-linked (GlcNAc...) asparagine glycan is linked to N520. N584 carries an N-linked (GlcNAc...) asparagine glycan. N669 carries an N-linked (GlcNAc...) asparagine glycan. The chain crosses the membrane as a helical span at residues 728–751 (DIIPIVAGVVAGIVLIGLALLLIW). Topologically, residues 752–798 (KLLMIIHDRREFAKFEKEKMNAKWDTGENPIYKSAVATVVNPKYEGK) are cytoplasmic. At Y783 the chain carries Phosphotyrosine.

It belongs to the integrin beta chain family. As to quaternary structure, heterodimer of an alpha and a beta subunit.

It is found in the cell membrane. The protein resides in the cell projection. It localises to the invadopodium membrane. Its subcellular location is the ruffle membrane. The protein localises to the melanosome. It is found in the cleavage furrow. The protein resides in the lamellipodium. It localises to the ruffle. In terms of biological role, beta integrins associate with alpha subunits to form receptor complexes that recognize the sequence R-G-D in a wide array of ligands. May be involved in osteoblast compaction. May play role in myoblast differentiation and fusion during skeletal myogenesis. In Xenopus laevis (African clawed frog), this protein is Integrin beta-1-B (itgb1-b).